The primary structure comprises 422 residues: F-box/FBD/LRR-repeat protein At5g56420 (422 aa).

The region spanning 5–54 (RDRLSQLPDDFLLQILSWLPTKDVLVTSLLSKRWRFLWTLVPRLNYDLRL) is the F-box domain. LRR repeat units follow at residues 59-85 (CPRF…NIKI), 136-163 (VLKL…HLLD), 164-189 (VKYL…VVQR), 193-212 (DNVK…SLHK), 214-238 (SQAF…DIED), 279-304 (LCLI…ELCT), and 305-330 (CAPR…KLRQ). The FBD domain occupies 342 to 391 (SWKQPALPKCLLFHLETFKWELYEGSQKQKEVATFILKHAIRLKTAIISP).

In Arabidopsis thaliana (Mouse-ear cress), this protein is F-box/FBD/LRR-repeat protein At5g56420.